The primary structure comprises 139 residues: 6,7-dimethyl-8-ribityllumazine synthase (139 aa).

Residues Phe-11, 42–44 (ALE), and 66–68 (VVI) contribute to the 5-amino-6-(D-ribitylamino)uracil site. Residue 71 to 72 (ET) coordinates (2S)-2-hydroxy-3-oxobutyl phosphate. His-74 functions as the Proton donor in the catalytic mechanism. Asn-98 is a 5-amino-6-(D-ribitylamino)uracil binding site. Arg-112 is a binding site for (2S)-2-hydroxy-3-oxobutyl phosphate.

It belongs to the DMRL synthase family.

The catalysed reaction is (2S)-2-hydroxy-3-oxobutyl phosphate + 5-amino-6-(D-ribitylamino)uracil = 6,7-dimethyl-8-(1-D-ribityl)lumazine + phosphate + 2 H2O + H(+). It functions in the pathway cofactor biosynthesis; riboflavin biosynthesis; riboflavin from 2-hydroxy-3-oxobutyl phosphate and 5-amino-6-(D-ribitylamino)uracil: step 1/2. Its function is as follows. Catalyzes the formation of 6,7-dimethyl-8-ribityllumazine by condensation of 5-amino-6-(D-ribitylamino)uracil with 3,4-dihydroxy-2-butanone 4-phosphate. This is the penultimate step in the biosynthesis of riboflavin. The chain is 6,7-dimethyl-8-ribityllumazine synthase from Novosphingobium aromaticivorans (strain ATCC 700278 / DSM 12444 / CCUG 56034 / CIP 105152 / NBRC 16084 / F199).